Consider the following 320-residue polypeptide: Mitochondrial thiamine pyrophosphate carrier (320 aa).

Solcar repeat units follow at residues 13-106, 116-202, and 214-309; these read NTKL…LTEL, REFS…LKHL, and NENL…FCNV. The helical transmembrane segment at 19–39 threads the bilayer; the sequence is AVAGSVSGLVTRALISPFDVI. Serine 51 is modified (phosphoserine). The next 4 helical transmembrane spans lie at 87–107, 122–142, 173–193, and 220–240; these read ILSI…TELV, FVCG…VDVL, VFYK…GLQF, and LLCG…LDLF. Residues 241-246 carry the Substrate recognition motif; that stretch reads KKRLQV. Residues 293-313 traverse the membrane as a helical segment; that stretch reads ALSTGFMFFWYEFFCNVFHCM.

The protein belongs to the mitochondrial carrier (TC 2.A.29) family.

The protein localises to the mitochondrion membrane. It catalyses the reaction thiamine phosphate(out) + thiamine diphosphate(in) = thiamine phosphate(in) + thiamine diphosphate(out). Its function is as follows. Mitochondrial transporter mediating uptake of thiamine diphosphate into mitochondria. It is not clear if the antiporter activity is affected by the membrane potential or by the proton electrochemical gradient. This Macaca fascicularis (Crab-eating macaque) protein is Mitochondrial thiamine pyrophosphate carrier (SLC25A19).